The sequence spans 384 residues: PqqA peptide cyclase (384 aa).

One can recognise a Radical SAM core domain in the interval 14–230 (IPAPVGLLAE…EAARERLKGQ (217 aa)). [4Fe-4S] cluster-binding residues include Cys28, Cys32, and Cys35.

The protein belongs to the radical SAM superfamily. PqqE family. As to quaternary structure, interacts with PqqD. The interaction is necessary for activity of PqqE. It depends on [4Fe-4S] cluster as a cofactor.

The enzyme catalyses [PQQ precursor protein] + S-adenosyl-L-methionine = E-Y cross-linked-[PQQ precursor protein] + 5'-deoxyadenosine + L-methionine + H(+). It participates in cofactor biosynthesis; pyrroloquinoline quinone biosynthesis. In terms of biological role, catalyzes the cross-linking of a glutamate residue and a tyrosine residue in the PqqA protein as part of the biosynthesis of pyrroloquinoline quinone (PQQ). The polypeptide is PqqA peptide cyclase (Methylorubrum extorquens (strain CM4 / NCIMB 13688) (Methylobacterium extorquens)).